The primary structure comprises 275 residues: Large ribosomal subunit protein uL2c (275 aa).

Residues 219 to 254 (TVRGSVMNPCDHPHGGGEGRAPIGRTRPLTPWGKPA) form a disordered region.

The protein belongs to the universal ribosomal protein uL2 family. In terms of assembly, part of the 50S ribosomal subunit.

It is found in the plastid. It localises to the chloroplast. This chain is Large ribosomal subunit protein uL2c (rpl2), found in Phaeodactylum tricornutum (strain CCAP 1055/1).